The primary structure comprises 481 residues: Protein hedgehog (481 aa).

Cys-93 carries N-palmitoyl cysteine lipidation. Ca(2+) is bound by residues Glu-157, Glu-158, Asp-163, Thr-193, Glu-194, Asp-197, and Asp-199. The Cholesterol glycine ester moiety is linked to residue Gly-265.

It belongs to the hedgehog family. Interacts with shf. The C-terminal part of the hedgehog protein precursor displays an autoproteolysis activity that results in the cleavage of the full-length protein into two parts (N-product and C-product). In addition, the C-terminal part displays a cholesterol transferase activity that results by the covalent attachment of a cholesterol moiety to the C-terminal of the newly generated N-product. The N-product is the active species in both local and long-range signaling, whereas the C-product has no signaling activity. Post-translationally, cholesterylation is required for N-product targeting to lipid rafts and multimerization. In terms of processing, N-palmitoylation by Rasp of the hedgehog N-product, within the secretory pathway, is required for the embryonic and larval patterning activities of the hedgehog signal.

The protein localises to the nucleus. It localises to the cytoplasm. The protein resides in the cell membrane. The catalysed reaction is glycyl-L-cysteinyl-[protein] + cholesterol + H(+) = [protein]-C-terminal glycyl cholesterol ester + N-terminal L-cysteinyl-[protein]. Its function is as follows. The C-terminal part of the hedgehog protein precursor displays an autoproteolysis activity that results in the cleavage of the full-length protein into two parts (N-product and C-product). In addition, the C-terminal part displays a cholesterol transferase activity that results by the covalent attachment of a cholesterol moiety to the C-terminal of the newly generated N-product. Once cleaved, the C-product has no signaling activity and diffuses from the cell. In terms of biological role, the dually lipidated hedgehog protein N-product is a morphogen which is essential for a variety of patterning events during development. Establishes the anterior-posterior axis of the embryonic segments and patterns the larval imaginal disks. Binds to the patched (ptc) receptor, which functions in association with smoothened (smo), to activate the transcription of target genes wingless (wg), decapentaplegic (dpp) and ptc. In the absence of hh, ptc represses the constitutive signaling activity of smo through fused (fu). Essential component of a signaling pathway which regulates the Duox-dependent gut immune response to bacterial uracil; required to activate Cad99C-dependent endosome formation, norpA-dependent Ca2+ mobilization and p38 MAPK, which are essential steps in the Duox-dependent production of reactive oxygen species (ROS) in response to intestinal bacterial infection. During photoreceptor differentiation, it up-regulates transcription of Ubr3, which in turn promotes the hh-signaling pathway by mediating the ubiquitination and degradation of cos. The protein is Protein hedgehog of Drosophila persimilis (Fruit fly).